Reading from the N-terminus, the 92-residue chain is MANLTGTIKGLYPETLSPEQLEKLRGFKIQTRITNEKYLRTHKEVELLISGFFREMFLKRPDNIPEFAADYFTDPRLPNKIHMQLIKEKKAA.

The region spanning 43 to 77 (KEVELLISGFFREMFLKRPDNIPEFAADYFTDPRL) is the RIIa domain.

The polypeptide is RIIa domain-containing protein 1 (RIIAD1) (Bos taurus (Bovine)).